The following is a 346-amino-acid chain: Nitrilase 3 (346 aa).

Residue Ser-2 is modified to N-acetylserine. The CN hydrolase domain occupies 25–297 (VRVTIVQSST…EGLVTADLDL (273 aa)). Residue Glu-65 is the Proton acceptor of the active site. Lys-152 acts as the Proton donor in catalysis. Cys-186 functions as the Nucleophile in the catalytic mechanism.

This sequence belongs to the carbon-nitrogen hydrolase superfamily. Nitrilase family.

It localises to the cell membrane. It carries out the reaction a nitrile + 2 H2O = a carboxylate + NH4(+). Functionally, can convert indole-3-acetonitrile to the plant hormone indole-3-acetic acid. This Arabidopsis thaliana (Mouse-ear cress) protein is Nitrilase 3 (NIT3).